Here is a 1241-residue protein sequence, read N- to C-terminus: DNA-directed RNA polymerase subunit beta (1241 aa).

The interval 1201–1224 (AEEEQDTDVDYITEDDFESPDPEI) is disordered.

It belongs to the RNA polymerase beta chain family. The RNAP catalytic core consists of 2 alpha, 1 beta, 1 beta' and 1 omega subunit. When a sigma factor is associated with the core the holoenzyme is formed, which can initiate transcription.

It carries out the reaction RNA(n) + a ribonucleoside 5'-triphosphate = RNA(n+1) + diphosphate. Functionally, DNA-dependent RNA polymerase catalyzes the transcription of DNA into RNA using the four ribonucleoside triphosphates as substrates. This chain is DNA-directed RNA polymerase subunit beta, found in Alkaliphilus oremlandii (strain OhILAs) (Clostridium oremlandii (strain OhILAs)).